Here is a 128-residue protein sequence, read N- to C-terminus: MAYVKERIYESMFIIAPNVPEEERENLVERVKKIIEERVKGKIEKVERMGMRKFAYEIKKFSEGDYTVIYFRCDGQNLQELENFYRVTPEIIRWQTFRRFDLEKKERKAQREKAAAEAVETGEGGSEA.

Belongs to the bacterial ribosomal protein bS6 family.

Binds together with bS18 to 16S ribosomal RNA. This is Small ribosomal subunit protein bS6 from Thermotoga petrophila (strain ATCC BAA-488 / DSM 13995 / JCM 10881 / RKU-1).